The primary structure comprises 1404 residues: DNA-directed RNA polymerase subunit beta' (1404 aa).

Residues Cys-60, Cys-62, Cys-75, and Cys-78 each coordinate Zn(2+). The Mg(2+) site is built by Asp-449, Asp-451, and Asp-453. The Zn(2+) site is built by Cys-778, Cys-852, Cys-859, and Cys-862. Residues 1381–1404 (DRPLEEEEEEEIPQSIADDSDGDE) form a disordered region. Residues 1384–1404 (LEEEEEEEIPQSIADDSDGDE) are compositionally biased toward acidic residues.

The protein belongs to the RNA polymerase beta' chain family. The RNAP catalytic core consists of 2 alpha, 1 beta, 1 beta' and 1 omega subunit. When a sigma factor is associated with the core the holoenzyme is formed, which can initiate transcription. It depends on Mg(2+) as a cofactor. Zn(2+) serves as cofactor.

It catalyses the reaction RNA(n) + a ribonucleoside 5'-triphosphate = RNA(n+1) + diphosphate. DNA-dependent RNA polymerase catalyzes the transcription of DNA into RNA using the four ribonucleoside triphosphates as substrates. This Leptospira borgpetersenii serovar Hardjo-bovis (strain L550) protein is DNA-directed RNA polymerase subunit beta'.